Here is a 358-residue protein sequence, read N- to C-terminus: L-Ala-D/L-Glu epimerase (358 aa).

Substrate-binding residues include arginine 24, threonine 135, and lysine 160. The Proton acceptor; specific for (R)-substrate epimerization role is filled by lysine 162. Positions 190, 218, and 243 each coordinate Mg(2+). Lysine 267 (proton acceptor; specific for (S)-substrate epimerization) is an active-site residue. Positions 295, 320, and 322 each coordinate substrate.

It belongs to the mandelate racemase/muconate lactonizing enzyme family. Mg(2+) serves as cofactor.

The catalysed reaction is L-alanyl-L-glutamate = L-alanyl-D-glutamate. The protein operates within cell wall degradation; peptidoglycan degradation. Its function is as follows. Catalyzes the epimerization of L-Ala-D-Glu to L-Ala-L-Glu and has probably a role in the metabolism of the murein peptide, of which L-Ala-D-Glu is a component. Is also able to catalyze the epimerization of L-Ala-D-Asp. In Clostridium acetobutylicum (strain ATCC 824 / DSM 792 / JCM 1419 / IAM 19013 / LMG 5710 / NBRC 13948 / NRRL B-527 / VKM B-1787 / 2291 / W), this protein is L-Ala-D/L-Glu epimerase.